The primary structure comprises 101 residues: Small ribosomal subunit protein uS14 (101 aa).

Belongs to the universal ribosomal protein uS14 family. Part of the 30S ribosomal subunit. Contacts proteins S3 and S10.

In terms of biological role, binds 16S rRNA, required for the assembly of 30S particles and may also be responsible for determining the conformation of the 16S rRNA at the A site. The protein is Small ribosomal subunit protein uS14 of Delftia acidovorans (strain DSM 14801 / SPH-1).